We begin with the raw amino-acid sequence, 238 residues long: Probable transcriptional regulatory protein SAB0618 (238 aa).

The protein belongs to the TACO1 family. YeeN subfamily.

It localises to the cytoplasm. The chain is Probable transcriptional regulatory protein SAB0618 from Staphylococcus aureus (strain bovine RF122 / ET3-1).